The following is a 507-amino-acid chain: MTTIKADEISNIIRERIEQYNREVKIVNIGTVLQVGDGIARIYGLDEVMAGELVEFEEGTIGIALNLESTNVGVVLMGDGLMIQEGSSVKATGKIAQIPVSEAYLGRVINALAKPIDGRGEISASESRLIESPAPGIISRRSVYEPLQTGLIAIDSMIPIGRGQRELIIGDRQTGKTAVATDTILNQQGQNVICVYVAIGQKASSVAQVVNTFQERGAMDYTIVVAETADSPATLQYLAPYTGAALAEYFMYRERHTLIIYDDPSKQAQAYRQMSLLLRRPPGREAYPGDVFYLHSRLLERAAKLGSQLGEGSMTALPIVETQSGDVSAYIPTNVISITDGQIFLSADLFNAGIRPAINVGISVSRVGSAAQIKAMKQVAGKLKLELAQFAELEAFAQFASDLDKATQNQLARGQRLRELLKQAQAAPLTVEEQIMTIYTGTNGYLDSLEIGQVRKFLVELRTYLKTNKPQFQEIISSTKIFTEEAEALLQEAIQEQKERFLLQEQF.

Residue 170–177 coordinates ATP; that stretch reads GDRQTGKT.

This sequence belongs to the ATPase alpha/beta chains family. As to quaternary structure, F-type ATPases have 2 components, CF(1) - the catalytic core - and CF(0) - the membrane proton channel. CF(1) has five subunits: alpha(3), beta(3), gamma(1), delta(1), epsilon(1). CF(0) has four main subunits: a, b, b' and c.

It is found in the plastid. It localises to the chloroplast thylakoid membrane. The catalysed reaction is ATP + H2O + 4 H(+)(in) = ADP + phosphate + 5 H(+)(out). Its function is as follows. Produces ATP from ADP in the presence of a proton gradient across the membrane. The alpha chain is a regulatory subunit. This Citrus sinensis (Sweet orange) protein is ATP synthase subunit alpha, chloroplastic.